The sequence spans 297 residues: N-acetylmuramic acid 6-phosphate etherase (297 aa).

Residues Ala55–Lys218 form the SIS domain. The active-site Proton donor is the Glu83. Glu114 is a catalytic residue.

The protein belongs to the GCKR-like family. MurNAc-6-P etherase subfamily. In terms of assembly, homodimer.

It carries out the reaction N-acetyl-D-muramate 6-phosphate + H2O = N-acetyl-D-glucosamine 6-phosphate + (R)-lactate. Its pathway is amino-sugar metabolism; 1,6-anhydro-N-acetylmuramate degradation. It participates in amino-sugar metabolism; N-acetylmuramate degradation. It functions in the pathway cell wall biogenesis; peptidoglycan recycling. In terms of biological role, specifically catalyzes the cleavage of the D-lactyl ether substituent of MurNAc 6-phosphate, producing GlcNAc 6-phosphate and D-lactate. Together with AnmK, is also required for the utilization of anhydro-N-acetylmuramic acid (anhMurNAc) either imported from the medium or derived from its own cell wall murein, and thus plays a role in cell wall recycling. The polypeptide is N-acetylmuramic acid 6-phosphate etherase (Serratia proteamaculans (strain 568)).